The chain runs to 78 residues: Conotoxin TsMEKL-P012 (78 aa).

The first 19 residues, 1-19, serve as a signal peptide directing secretion; sequence MEKLTILLLLAAVLVLAQA. Residues 20–38 constitute a propeptide that is removed on maturation; that stretch reads LIKKGGGEKRQKEKINFLS. Disulfide bonds link cysteine 52–cysteine 66, cysteine 59–cysteine 70, and cysteine 65–cysteine 75.

This sequence belongs to the conotoxin O2 superfamily. In terms of tissue distribution, expressed by the venom duct.

It localises to the secreted. In Conus tessulatus (Tessellate cone), this protein is Conotoxin TsMEKL-P012.